Here is a 232-residue protein sequence, read N- to C-terminus: Phosphatidylserine decarboxylase proenzyme (232 aa).

Serine 190 acts as the Schiff-base intermediate with substrate; via pyruvic acid in catalysis. Serine 190 carries the pyruvic acid (Ser); by autocatalysis modification.

Belongs to the phosphatidylserine decarboxylase family. PSD-A subfamily. In terms of assembly, heterodimer of a large membrane-associated beta subunit and a small pyruvoyl-containing alpha subunit. It depends on pyruvate as a cofactor. Post-translationally, is synthesized initially as an inactive proenzyme. Formation of the active enzyme involves a self-maturation process in which the active site pyruvoyl group is generated from an internal serine residue via an autocatalytic post-translational modification. Two non-identical subunits are generated from the proenzyme in this reaction, and the pyruvate is formed at the N-terminus of the alpha chain, which is derived from the carboxyl end of the proenzyme. The post-translation cleavage follows an unusual pathway, termed non-hydrolytic serinolysis, in which the side chain hydroxyl group of the serine supplies its oxygen atom to form the C-terminus of the beta chain, while the remainder of the serine residue undergoes an oxidative deamination to produce ammonia and the pyruvoyl prosthetic group on the alpha chain.

It is found in the cell membrane. It catalyses the reaction a 1,2-diacyl-sn-glycero-3-phospho-L-serine + H(+) = a 1,2-diacyl-sn-glycero-3-phosphoethanolamine + CO2. Its pathway is phospholipid metabolism; phosphatidylethanolamine biosynthesis; phosphatidylethanolamine from CDP-diacylglycerol: step 2/2. Its function is as follows. Catalyzes the formation of phosphatidylethanolamine (PtdEtn) from phosphatidylserine (PtdSer). The sequence is that of Phosphatidylserine decarboxylase proenzyme from Rhizobium etli (strain CIAT 652).